The chain runs to 98 residues: Co-chaperonin GroES 1 (98 aa).

Belongs to the GroES chaperonin family. As to quaternary structure, heptamer of 7 subunits arranged in a ring. Interacts with the chaperonin GroEL.

It localises to the cytoplasm. Together with the chaperonin GroEL, plays an essential role in assisting protein folding. The GroEL-GroES system forms a nano-cage that allows encapsulation of the non-native substrate proteins and provides a physical environment optimized to promote and accelerate protein folding. GroES binds to the apical surface of the GroEL ring, thereby capping the opening of the GroEL channel. The protein is Co-chaperonin GroES 1 of Rhodopseudomonas palustris (strain ATCC BAA-98 / CGA009).